Reading from the N-terminus, the 70-residue chain is Large ribosomal subunit protein bL31 (70 aa).

Zn(2+) is bound by residues cysteine 16, cysteine 18, cysteine 37, and cysteine 40.

It belongs to the bacterial ribosomal protein bL31 family. Type A subfamily. Part of the 50S ribosomal subunit. It depends on Zn(2+) as a cofactor.

Binds the 23S rRNA. The protein is Large ribosomal subunit protein bL31 of Shewanella baltica (strain OS223).